The chain runs to 297 residues: 4,5-DOPA dioxygenase extradiol-like protein (297 aa).

Zn(2+) contacts are provided by His30, His82, His205, and His263.

Belongs to the DODA-type extradiol aromatic ring-opening dioxygenase family. The cofactor is Zn(2+).

The protein resides in the cytoplasm. Its subcellular location is the nucleus. Its function is as follows. May be involved in the metabolism of aromatic compounds. This chain is 4,5-DOPA dioxygenase extradiol-like protein, found in Schizosaccharomyces pombe (strain 972 / ATCC 24843) (Fission yeast).